Consider the following 1376-residue polypeptide: MDRRSEAFKIPVPEVIPAGQILSTIEVSSHRTLFDFFKQIRSDDNGLYAAQFDVLLGTYCNTLTLVRFLELGLSVSCVCTKFPELNYVNDGTIQFEVQQPMIARDGPHPVDQPTHTYMMKHIEQRSLSAAFAIAAEALGLIGGTTLDGTQISSSLRVRAIQQLARNVQTVLDSFERGTADQLLRVLLEKAPPLTLLAPLQIYRDEGRLASRVNRAVLVSELKRRVIEDTFFLTKHERNRKELVVARLAELVNCTAPSVAVTRMTHSDTKGRPVDGVVVTTAGVRQRLLQGILTLEDMAADVPVTYGEMMITGTNLVTALVMGKAVRNLDDVAHHLLGMQRDQVRANEKLIKDYEDVPSTARVRADLVLVGDRLVFLEALEKRVYQATNVPYPLVGNLDLTFIIPLGIFKPATDRYSRHAGSFTPTPGQPDPRTYPPQTVYFFNKDGNLVQLSFDSAAGTVCHSSFLDVDSVLVAIRREPHELHCAFGAYVTLPPAGTLLDQMRRFFERWHMLMPARPRWTAEALMTIDQLLSPGNANLRLELHPAFDFFVAPADVVIPGPFDMPNVMPTVMAMPRLINGNIPLPLCPVEFRDSRGFELSVDRHRLNPATVLAVRGAFRDANYPMVFYILEAVIHGSERTFCALARLIIQCIVSYWRNTHQVAFVNNFYMIMYINAYLGNGELPEECTAIYRDLLEHVQALRRLVAEYTVPGEAVGGQGHDALNNVLLDPALLPPLIWDCDPILHRADMGRARAQELWVDGVDYAAIPWVEMAEVNFGNTGGHLVHNRPIRGENKRNPIVPHHDPEWSVLSKIYYYAVVPAFSRGNCCTMGVRYDRVYPLVQTVVIPDLGAEEIAPTSPSDPRHPLNPRHLVPNTLNILFHNARVAVDTDALLLLQEVVTNMAERTTPVLATAAPDAGTATAVTQEMRTFDGTLHHGILMMAYQRNDETLLEGTFFYPAPVNALFACPEHLGALPGLNAEVLEAARDVPPVPHFFGGNYYATVRQPVAQHAVQSRADENTLTYALMAGYFKLGPIALSHQFATGFHPGFAFTVVRQDRFLTENILFAEKASESYFMGQLQVNRHEAVGGVNFVLTQPRANVDLGVGFTAAYAAAALRTPVTDMGNLPQNLYLTRGTIPMLDGDADAYLRRVVNTGNRLGPQGPRPIFGQLMPATPAGVAHGQAAVCEFIVTPVSADLNYFRRPCNPRGRSAGPVYACDGEADAVDVMYDHTQGDPAYPSRATVNPWASQRNSYGDRLYNGKYNLNGASPVYSPCFRFFTPTEVEAKGRNMTQLIADVGASVAPSTSNTEIQFKRPHGSTDLVEDPCSLFQEAYPLLSSTDTALLRTPHIGEIGADEGHFAQYLIRDESPLKGCFPRI.

It belongs to the herpesviridae major capsid protein family. Homomultimer. Makes the hexons and eleven out of twelve pentons. Interacts with triplex proteins 1/TRX1 and 2/TRX2; adjacent capsomers are linked together in groups of three by triplexes, heterotrimeric complexes composed of one molecule of TRX1 and two molecules of TRX2. Interacts with scaffold protein; this interaction allows efficient MCP transport to the host nucleus. Interacts with capsid vertex component 2/CVC2. Interacts with the small capsomere-interacting protein/SCP.

Its subcellular location is the virion. It is found in the host nucleus. Its function is as follows. Self-assembles to form an icosahedral capsid with a T=16 symmetry, about 200 nm in diameter, and consisting of 150 hexons and 12 pentons (total of 162 capsomers). Hexons form the edges and faces of the capsid and are each composed of six MCP molecules. In contrast, one penton is found at each of the 12 vertices. Eleven of the pentons are MCP pentamers, while the last vertex is occupied by the portal complex. The capsid is surrounded by a layer of proteinaceous material designated the tegument which, in turn, is enclosed in an envelope of host cell-derived lipids containing virus-encoded glycoproteins. In Equus caballus (Horse), this protein is Major capsid protein.